Reading from the N-terminus, the 396-residue chain is Elongation factor Tu-B (396 aa).

The tr-type G domain maps to 10–206; sequence KLHVNVGTIG…ALDTFIPDPT (197 aa). Residues 19 to 26 form a G1 region; it reads GHVDHGKT. 19-26 serves as a coordination point for GTP; that stretch reads GHVDHGKT. Threonine 26 lines the Mg(2+) pocket. The interval 60-64 is G2; it reads GITIS. A G3 region spans residues 81-84; it reads DCPG. Residues 81–85 and 136–139 each bind GTP; these read DCPGH and NKAD. The G4 stretch occupies residues 136–139; it reads NKAD. The tract at residues 174–176 is G5; the sequence is SAR.

It belongs to the TRAFAC class translation factor GTPase superfamily. Classic translation factor GTPase family. EF-Tu/EF-1A subfamily. As to quaternary structure, monomer.

The protein resides in the cytoplasm. The enzyme catalyses GTP + H2O = GDP + phosphate + H(+). In terms of biological role, GTP hydrolase that promotes the GTP-dependent binding of aminoacyl-tRNA to the A-site of ribosomes during protein biosynthesis. The sequence is that of Elongation factor Tu-B from Xanthomonas campestris pv. campestris (strain ATCC 33913 / DSM 3586 / NCPPB 528 / LMG 568 / P 25).